We begin with the raw amino-acid sequence, 123 residues long: Large ribosomal subunit protein bL21 (123 aa).

Belongs to the bacterial ribosomal protein bL21 family. In terms of assembly, part of the 50S ribosomal subunit. Contacts protein L20.

This protein binds to 23S rRNA in the presence of protein L20. The polypeptide is Large ribosomal subunit protein bL21 (Sinorhizobium fredii (strain NBRC 101917 / NGR234)).